A 656-amino-acid chain; its full sequence is Threonine--tRNA ligase (656 aa).

The 66-residue stretch at 2–67 folds into the TGS domain; that stretch reads LMSQITIILP…KDQTKVALVT (66 aa). The interval 251-542 is catalytic; the sequence is DHRKLGKELG…YLEHTAGHLP (292 aa). Zn(2+) contacts are provided by C342, H393, and H519.

It belongs to the class-II aminoacyl-tRNA synthetase family. As to quaternary structure, homodimer. The cofactor is Zn(2+).

The protein resides in the cytoplasm. It catalyses the reaction tRNA(Thr) + L-threonine + ATP = L-threonyl-tRNA(Thr) + AMP + diphosphate + H(+). Functionally, catalyzes the attachment of threonine to tRNA(Thr) in a two-step reaction: L-threonine is first activated by ATP to form Thr-AMP and then transferred to the acceptor end of tRNA(Thr). Also edits incorrectly charged L-seryl-tRNA(Thr). This Bdellovibrio bacteriovorus (strain ATCC 15356 / DSM 50701 / NCIMB 9529 / HD100) protein is Threonine--tRNA ligase.